Here is a 309-residue protein sequence, read N- to C-terminus: Peptidyl-prolyl cis-trans isomerase 9 (309 aa).

The PPIase cyclophilin-type domain maps to 8 to 173 (FLDISVDENL…AKVLISNCGE (166 aa)). Composition is skewed to basic and acidic residues over residues 217–229 (NEKK…DKRR), 239–265 (RSHE…RDEN), 280–289 (ERSATPEHWR), and 296–309 (WVHD…EDLV). Positions 217-309 (NEKKHEMRND…SHKHPEEDLV (93 aa)) are disordered.

Belongs to the cyclophilin-type PPIase family. As to expression, co-expressed with pdi-1 in the syncytial hypodermis.

It carries out the reaction [protein]-peptidylproline (omega=180) = [protein]-peptidylproline (omega=0). In terms of biological role, PPIases accelerate the folding of proteins. It catalyzes the cis-trans isomerization of proline imidic peptide bonds in oligopeptides. Thought to function as a catalyst in the folding and modification of cuticle collagens. The sequence is that of Peptidyl-prolyl cis-trans isomerase 9 (cyn-9) from Caenorhabditis elegans.